Here is a 337-residue protein sequence, read N- to C-terminus: Phosphoribosylformylglycinamidine cyclo-ligase (337 aa).

Belongs to the AIR synthase family.

It is found in the cytoplasm. It carries out the reaction 2-formamido-N(1)-(5-O-phospho-beta-D-ribosyl)acetamidine + ATP = 5-amino-1-(5-phospho-beta-D-ribosyl)imidazole + ADP + phosphate + H(+). Its pathway is purine metabolism; IMP biosynthesis via de novo pathway; 5-amino-1-(5-phospho-D-ribosyl)imidazole from N(2)-formyl-N(1)-(5-phospho-D-ribosyl)glycinamide: step 2/2. The protein is Phosphoribosylformylglycinamidine cyclo-ligase of Pseudothermotoga lettingae (strain ATCC BAA-301 / DSM 14385 / NBRC 107922 / TMO) (Thermotoga lettingae).